Reading from the N-terminus, the 199-residue chain is Putative peroxiredoxin ycf42 (199 aa).

A Thioredoxin domain is found at 8–165 (LRVGQLAPDF…TLRVLQAIQY (158 aa)). The active-site Cysteine sulfenic acid (-SOH) intermediate is cysteine 53.

It belongs to the peroxiredoxin family. AhpC/Prx1 subfamily. In terms of assembly, homodimer; disulfide-linked, upon oxidation. Post-translationally, the Cys-53-SH group is the primary site of oxidation by H(2)O(2), and the oxidized Cys-53 (probably Cys-SOH) rapidly reacts with Cys-174-SH of the other subunit to form an intermolecular disulfide. This disulfide is subsequently reduced by thioredoxin.

It localises to the plastid. It is found in the chloroplast. It catalyses the reaction a hydroperoxide + [thioredoxin]-dithiol = an alcohol + [thioredoxin]-disulfide + H2O. Thiol-specific peroxidase that catalyzes the reduction of hydrogen peroxide and organic hydroperoxides to water and alcohols, respectively. Plays a role in cell protection against oxidative stress by detoxifying peroxides. The chain is Putative peroxiredoxin ycf42 (ycf42) from Pyropia yezoensis (Susabi-nori).